A 450-amino-acid chain; its full sequence is Probable glycylpeptide N-tetradecanoyltransferase (450 aa).

The tract at residues 1–28 is disordered; sequence MSHGHSHDGAPCGGHHGDDGAGGSRPSV. Tetradecanoyl-CoA is bound by residues glutamine 67, phenylalanine 68, tryptophan 69, phenylalanine 200, leucine 201, cysteine 202, valine 203, serine 209, arginine 211, valine 212, and alanine 213.

It belongs to the NMT family.

It localises to the cytoplasm. The catalysed reaction is N-terminal glycyl-[protein] + tetradecanoyl-CoA = N-tetradecanoylglycyl-[protein] + CoA + H(+). In terms of biological role, adds a myristoyl group to the N-terminal glycine residue of certain cellular proteins. The protein is Probable glycylpeptide N-tetradecanoyltransferase (nmt-1) of Caenorhabditis elegans.